We begin with the raw amino-acid sequence, 370 residues long: Prolactin-releasing peptide receptor (370 aa).

The Extracellular portion of the chain corresponds to 1 to 62; the sequence is MASLPTQGPA…LQLVHQLKGL (62 aa). Asn27 and Asn36 each carry an N-linked (GlcNAc...) asparagine glycan. Residues 63-83 traverse the membrane as a helical segment; it reads IVLLYSIVVVVGLVGNCLLVL. The Cytoplasmic segment spans residues 84–101; it reads VIARVRRLHNVTNFLIGN. Residues 102-122 form a helical membrane-spanning segment; sequence LALSDVLMCTACVPLTLAYAF. Residues 123 to 126 lie on the Extracellular side of the membrane; sequence EPRG. A helical transmembrane segment spans residues 127–147; it reads WVFGGGLCHLVFFLQPVTVYV. A disulfide bridge links Cys134 with Cys211. The Cytoplasmic portion of the chain corresponds to 148–175; it reads SVFTLTTIAVDRYVVLVHPLRRRISLRF. The helical transmembrane segment at 176–196 threads the bilayer; it reads SAYAVLAIWALSAVLALPAAL. The Extracellular segment spans residues 197-225; that stretch reads HTYHVELKPHRVRLCEEFWGSQERQRQLY. Residues 226–246 traverse the membrane as a helical segment; the sequence is AWGLLLVTYLLPLLVILLSYV. The Cytoplasmic portion of the chain corresponds to 247–276; the sequence is RVSVNLRNRVVPGCVTQSQADWDRARRRRT. A helical membrane pass occupies residues 277–297; the sequence is FCLLVVVVVVFAVCWLPLHVF. The Extracellular segment spans residues 298-317; that stretch reads NLLRDLDPHAIDPYAFGLVQ. The chain crosses the membrane as a helical span at residues 318-338; it reads LLCHWLAMSSACYNPFIYAWL. At 339 to 369 the chain is on the cytoplasmic side; that stretch reads HDSFREELRKLLLAWPRKIAPHGQSMTVSVV. Residues 365–370 form a required for interaction with GRIP1, GRIP2 and PICK1 region; the sequence is TVSVVI.

This sequence belongs to the G-protein coupled receptor 1 family. As to quaternary structure, interacts through its C-terminal region with the PDZ domain-containing proteins GRIP1, GRIP2 and PICK1. Interacts with PDZ domains 4 and 5 of GRIP1 and with the PDZ domain of PICK1.

The protein resides in the cell membrane. Functionally, receptor for prolactin-releasing peptide (PrRP). Implicated in lactation, regulation of food intake and pain-signal processing. The chain is Prolactin-releasing peptide receptor (PRLHR) from Bos taurus (Bovine).